The primary structure comprises 494 residues: tRNA-2-methylthio-N(6)-dimethylallyladenosine synthase (494 aa).

The MTTase N-terminal domain occupies 5–121; it reads RTYQVRTYGC…LPALLERARV (117 aa). The [4Fe-4S] cluster site is built by Cys14, Cys50, Cys84, Cys158, Cys162, and Cys165. The 231-residue stretch at 144 to 374 folds into the Radical SAM core domain; it reads RESVYAAWVA…LELQERISEE (231 aa). The 70-residue stretch at 377-446 folds into the TRAM domain; sequence AKFVGREVEV…PHHLVADSGI (70 aa). Positions 458 to 468 are enriched in basic and acidic residues; that stretch reads WEARNAPERRP. The segment at 458 to 494 is disordered; sequence WEARNAPERRPTGVLLGMPKVGAPEPQPSVVGGCCDS.

This sequence belongs to the methylthiotransferase family. MiaB subfamily. As to quaternary structure, monomer. Requires [4Fe-4S] cluster as cofactor.

The protein localises to the cytoplasm. The catalysed reaction is N(6)-dimethylallyladenosine(37) in tRNA + (sulfur carrier)-SH + AH2 + 2 S-adenosyl-L-methionine = 2-methylsulfanyl-N(6)-dimethylallyladenosine(37) in tRNA + (sulfur carrier)-H + 5'-deoxyadenosine + L-methionine + A + S-adenosyl-L-homocysteine + 2 H(+). In terms of biological role, catalyzes the methylthiolation of N6-(dimethylallyl)adenosine (i(6)A), leading to the formation of 2-methylthio-N6-(dimethylallyl)adenosine (ms(2)i(6)A) at position 37 in tRNAs that read codons beginning with uridine. The chain is tRNA-2-methylthio-N(6)-dimethylallyladenosine synthase from Thermobifida fusca (strain YX).